The following is a 476-amino-acid chain: Protein transport protein Sec61 subunit alpha (476 aa).

Topologically, residues 2-33 are cytoplasmic; sequence GIKFLEVIKPFCAVLPEIQKPERKIQFREKVL. Residues 34–53 form a helical membrane-spanning segment; sequence WTAITLFIFLVCCQIPLFGI. At 54–76 the chain is on the lumenal side; the sequence is MSSDSADPFYWMRVILASNRGTL. The helical transmembrane segment at 77-96 threads the bilayer; that stretch reads MELGISPIVTSGLIMQLLAG. The Cytoplasmic portion of the chain corresponds to 97 to 117; that stretch reads AKIIEVGDTPKDRALFNGAQK. A helical transmembrane segment spans residues 118-138; that stretch reads LFGMIITIGQAIVYVMTGMYG. Topologically, residues 139 to 144 are lumenal; it reads DPSEMG. Residues 145-165 traverse the membrane as a helical segment; the sequence is AGICLVIIIQLFVAGLIVLLL. The Cytoplasmic segment spans residues 166-172; that stretch reads DELLQKG. Residues 173–193 form a helical membrane-spanning segment; that stretch reads YGLGSGISLFIATNICETIVW. At 194-240 the chain is on the lumenal side; it reads KAFSPTTVNTGRGTEFEGAIIALFHLLATRTDKVRALREAFYRQNLP. Residues 241–261 form a helical membrane-spanning segment; that stretch reads NLMNLIATVFVFAVVIYFQGF. Over 262–288 the chain is Cytoplasmic; the sequence is RVDLPIKSARYRGQYNTYPIKLFYTSN. The helical transmembrane segment at 289-309 threads the bilayer; sequence IPIILQSALVSNLYVISQMLS. Residues 310–354 lie on the Lumenal side of the membrane; that stretch reads TRFSGNFLVNLLGTWSDTSTGGPARAYPVGGLCYYFSPPESFGSV. Residues 355-375 form a helical membrane-spanning segment; the sequence is LDDPVHASIYIVFMLGSCAFF. At 376–420 the chain is on the cytoplasmic side; sequence SKTWIEVSGSSAKDVAKQLKEQQMVMRGHRETSMVHELNRYIPTA. The helical transmembrane segment at 421 to 441 threads the bilayer; it reads AAFGGLCIGGLSVMADFLGAI. The Lumenal segment spans residues 442–445; it reads GSGT. Residues 446-462 traverse the membrane as a helical segment; the sequence is GILLAVTIIYQYFEIFV. Residues 463–476 lie on the Cytoplasmic side of the membrane; sequence KEQSEMGSMGALLF.

This sequence belongs to the SecY/SEC61-alpha family. As to quaternary structure, the SEC61 channel-forming translocon complex consists of channel-forming core components SEC61A1, SEC61B and SEC61G and different auxiliary components such as SEC62 and SEC63. The SEC61 channel associates with the multi-pass translocon (MPT) complex.

It is found in the endoplasmic reticulum membrane. In terms of biological role, component of SEC61 channel-forming translocon complex that mediates transport of signal peptide-containing precursor polypeptides across the endoplasmic reticulum (ER). Forms a ribosome receptor and a gated pore in the ER membrane, both functions required for cotranslational translocation of nascent polypeptides. May cooperate with auxiliary protein SEC62, SEC63 and HSPA5/BiP to enable post-translational transport of small presecretory proteins. The SEC61 channel is also involved in ER membrane insertion of transmembrane proteins: it mediates membrane insertion of the first few transmembrane segments of proteins, while insertion of subsequent transmembrane regions of multi-pass membrane proteins is mediated by the multi-pass translocon (MPT) complex. This is Protein transport protein Sec61 subunit alpha (sec61a) from Gadus ogac (Greenland cod).